The following is a 188-amino-acid chain: MDVNLAPLRAWDDFFPGSDRFARPDFRDISKWNNRVVSNLLYYQTNYLVVAAMMISVVGFLSPFNMILGGIIVVLVFTGFVWAAHNKDILRRMKKQYPTAFVMVVMLASYFLISMFGGVMVFVFGITFPLLLMFIHASLRLRNLKNKLENKMEGIGLKKTPMGIILDALEQQEDSINKFADYISKARE.

Methionine 1 is modified (N-acetylmethionine). Over 1–35 (MDVNLAPLRAWDDFFPGSDRFARPDFRDISKWNNR) the chain is Cytoplasmic. Helical transmembrane passes span 36–56 (VVSN…MMIS) and 57–77 (VVGF…VLVF). Residues 78 to 92 (TGFVWAAHNKDILRR) are Cytoplasmic-facing. 2 helical membrane passes run 93 to 113 (MKKQ…YFLI) and 115 to 135 (MFGG…LMFI). The tract at residues 103 to 117 (MVVMLASYFLISMFG) is required for homodimer formation and heterodimer formation with ARL6IP1. Over 136–188 (HASLRLRNLKNKLENKMEGIGLKKTPMGIILDALEQQEDSINKFADYISKARE) the chain is Cytoplasmic. The targeting to endoplasmic reticulum membrane stretch occupies residues 136–188 (HASLRLRNLKNKLENKMEGIGLKKTPMGIILDALEQQEDSINKFADYISKARE).

The protein belongs to the PRA1 family. In terms of assembly, homodimer. Heterodimer with ARL6IP1. Forms multimers. Interacts with ARL6. Interacts with prenylated RAB1A and RAB3A. Interacts with SLC1A1/EAAC1. Interacts with RTN2 (via first transmembrane domain). Does not interact with VAMP1, VAMP2 or VAMP3. As to expression, ubiquitous. Most abundant in heart and brain. In the embryonic brain cortex, expressed in neurons and astrocytes.

Its subcellular location is the endoplasmic reticulum membrane. It is found in the cell membrane. The protein localises to the cytoplasm. It localises to the cytoskeleton. Regulates intracellular concentrations of taurine and glutamate. Negatively modulates SLC1A1/EAAC1 glutamate transport activity by decreasing its affinity for glutamate in a PKC activity-dependent manner. Plays a role in the retention of SLC1A1/EAAC1 in the endoplasmic reticulum. In Rattus norvegicus (Rat), this protein is PRA1 family protein 3 (Arl6ip5).